The chain runs to 228 residues: UPF0173 metal-dependent hydrolase lwe1590 (228 aa).

This sequence belongs to the UPF0173 family.

The polypeptide is UPF0173 metal-dependent hydrolase lwe1590 (Listeria welshimeri serovar 6b (strain ATCC 35897 / DSM 20650 / CCUG 15529 / CIP 8149 / NCTC 11857 / SLCC 5334 / V8)).